The chain runs to 410 residues: Interstrand DNA cross-link repair glycosylase (410 aa).

The QXD; important for activity signature appears at 45 to 47 (QID).

This sequence belongs to the DNA glycosylase AlkZ-like family.

Functionally, DNA glycosylase involved in the repair of interstrand DNA cross-links (ICLs), which are highly toxic DNA lesions that covalently tether the opposing strands of DNA, thereby inhibiting essential cellular processes such as DNA replication and transcription. Acts by unhooking both sides of the ICLs, forming abasic (AP) sites on both strands. Unhooks ICLs derived from various cross-linking agents, including azinomycin B (AZB) and mechlorethamine, also known as nitrogen mustard (NM), protecting cells from the toxicity of these cross-linking agents. In vitro, also acts on monoadducts and can catalyze the excision of N7-methylguanine (7mGua) from an oligonucleotide containing N7-methyldeoxyguanosine (d7mG). Shows no unhooking activity toward FaPy-ICLs. This is Interstrand DNA cross-link repair glycosylase (ycaQ) from Escherichia coli (strain K12).